Here is a 390-residue protein sequence, read N- to C-terminus: Lipoyl synthase, mitochondrial (390 aa).

A mitochondrion-targeting transit peptide spans 1-19; sequence MPTLLRILRPPRSPFTRCL. The tract at residues 23–48 is disordered; that stretch reads ATPSSSGSSSRSKFTESLETGPGLDD. Positions 98, 103, 109, 136, 140, 143, and 350 each coordinate [4Fe-4S] cluster. One can recognise a Radical SAM core domain in the interval 119 to 339; it reads AEGRSAATAT…KEVAENLGFL (221 aa).

Belongs to the radical SAM superfamily. Lipoyl synthase family. [4Fe-4S] cluster serves as cofactor.

Its subcellular location is the mitochondrion. The enzyme catalyses [[Fe-S] cluster scaffold protein carrying a second [4Fe-4S](2+) cluster] + N(6)-octanoyl-L-lysyl-[protein] + 2 oxidized [2Fe-2S]-[ferredoxin] + 2 S-adenosyl-L-methionine + 4 H(+) = [[Fe-S] cluster scaffold protein] + N(6)-[(R)-dihydrolipoyl]-L-lysyl-[protein] + 4 Fe(3+) + 2 hydrogen sulfide + 2 5'-deoxyadenosine + 2 L-methionine + 2 reduced [2Fe-2S]-[ferredoxin]. It participates in protein modification; protein lipoylation via endogenous pathway; protein N(6)-(lipoyl)lysine from octanoyl-[acyl-carrier-protein]: step 2/2. In terms of biological role, catalyzes the radical-mediated insertion of two sulfur atoms into the C-6 and C-8 positions of the octanoyl moiety bound to the lipoyl domains of lipoate-dependent enzymes, thereby converting the octanoylated domains into lipoylated derivatives. This is Lipoyl synthase, mitochondrial from Laccaria bicolor (strain S238N-H82 / ATCC MYA-4686) (Bicoloured deceiver).